The following is a 365-amino-acid chain: Succinyl-diaminopimelate desuccinylase (365 aa).

H64 is a Zn(2+) binding site. The active site involves D66. D95 contacts Zn(2+). E125 serves as the catalytic Proton acceptor. Residues E126, E154, and H339 each contribute to the Zn(2+) site.

Belongs to the peptidase M20A family. DapE subfamily. Homodimer. Zn(2+) serves as cofactor. Requires Co(2+) as cofactor.

It catalyses the reaction N-succinyl-(2S,6S)-2,6-diaminopimelate + H2O = (2S,6S)-2,6-diaminopimelate + succinate. It functions in the pathway amino-acid biosynthesis; L-lysine biosynthesis via DAP pathway; LL-2,6-diaminopimelate from (S)-tetrahydrodipicolinate (succinylase route): step 3/3. Catalyzes the hydrolysis of N-succinyl-L,L-diaminopimelic acid (SDAP), forming succinate and LL-2,6-diaminopimelate (DAP), an intermediate involved in the bacterial biosynthesis of lysine and meso-diaminopimelic acid, an essential component of bacterial cell walls. In Sulfurimonas denitrificans (strain ATCC 33889 / DSM 1251) (Thiomicrospira denitrificans (strain ATCC 33889 / DSM 1251)), this protein is Succinyl-diaminopimelate desuccinylase.